The sequence spans 449 residues: Chromosomal replication initiator protein DnaA (449 aa).

A domain I, interacts with DnaA modulators region spans residues 1 to 73 (MDADLKNLWD…ANSIKAVCSK (73 aa)). Residues 73-110 (KLYTIEFIIMSEIYEKEEIKSSSNQKSKAIVVNDEMSS) form a domain II region. The domain III, AAA+ region stretch occupies residues 111 to 327 (TLNPKYTFNS…GALIRIIAYS (217 aa)). 4 residues coordinate ATP: G155, G157, K158, and T159. The domain IV, binds dsDNA stretch occupies residues 328 to 449 (SLTNREVTVD…NDITKKLTQN (122 aa)).

Belongs to the DnaA family. In terms of assembly, oligomerizes as a right-handed, spiral filament on DNA at oriC.

It is found in the cytoplasm. Functionally, plays an essential role in the initiation and regulation of chromosomal replication. ATP-DnaA binds to the origin of replication (oriC) to initiate formation of the DNA replication initiation complex once per cell cycle. Binds the DnaA box (a 9 base pair repeat at the origin) and separates the double-stranded (ds)DNA. Forms a right-handed helical filament on oriC DNA; dsDNA binds to the exterior of the filament while single-stranded (ss)DNA is stabiized in the filament's interior. The ATP-DnaA-oriC complex binds and stabilizes one strand of the AT-rich DNA unwinding element (DUE), permitting loading of DNA polymerase. After initiation quickly degrades to an ADP-DnaA complex that is not apt for DNA replication. Binds acidic phospholipids. This is Chromosomal replication initiator protein DnaA from Clostridium beijerinckii (strain ATCC 51743 / NCIMB 8052) (Clostridium acetobutylicum).